Here is a 740-residue protein sequence, read N- to C-terminus: DNA polymerase iota (740 aa).

A disordered region spans residues 1–21 (MEKLGVEPEEEGGGDDDEEDA). The span at 7–21 (EPEEEGGGDDDEEDA) shows a compositional bias: acidic residues. The region spanning 55 to 268 (IVHVDLDCFY…NHIKEIPGIG (214 aa)) is the UmuC domain. D59 and L60 together coordinate Mg(2+). Mn(2+)-binding residues include D59 and L60. Residues Y64 and R96 each contribute to the a 2'-deoxyribonucleoside 5'-triphosphate site. Residue D151 coordinates Mg(2+). A Mn(2+)-binding site is contributed by D151. Residue E152 is the Proton acceptor of the active site. DNA-binding stretches follow at residues 249-314 (ESCQ…FGED) and 325-439 (QSFS…CNLK). The Ubiquitin-binding 1 (UBM1) signature appears at 527–544 (VDQEVFKQLPVDIQEEIL). 2 disordered regions span residues 581-615 (PINP…SSYM) and 671-704 (NHTT…KITF). A compositionally biased stretch (low complexity) spans 605 to 615 (SGFNSSSSSYM). The segment covering 672-702 (HTTDSHKQTVATDSHEGLTENREPDSVDEKI) has biased composition (basic and acidic residues). A Ubiquitin-binding 2 (UBM2) motif is present at residues 708–725 (IDPQVFYELPEAVQKELL).

It belongs to the DNA polymerase type-Y family. In terms of assembly, interacts with POLH. Interacts with REV1. Interacts with ubiquitin. It depends on Mg(2+) as a cofactor. Mn(2+) serves as cofactor. Post-translationally, monoubiquitinated. Protein monoubiquitination prevents POLI binding to ubiquitin via the ubiquitin-binding motif 1 and ubiquitin-binding motif 2. In terms of tissue distribution, ubiquitous. Highly expressed in testis.

It localises to the nucleus. The enzyme catalyses DNA(n) + a 2'-deoxyribonucleoside 5'-triphosphate = DNA(n+1) + diphosphate. Error-prone DNA polymerase specifically involved in DNA repair. Plays an important role in translesion synthesis, where the normal high-fidelity DNA polymerases cannot proceed and DNA synthesis stalls. Favors Hoogsteen base-pairing in the active site. Inserts the correct base with high-fidelity opposite an adenosine template. Exhibits low fidelity and efficiency opposite a thymidine template, where it will preferentially insert guanosine. May play a role in hypermutation of immunoglobulin genes. Forms a Schiff base with 5'-deoxyribose phosphate at abasic sites, but may not have lyase activity. The chain is DNA polymerase iota (POLI) from Homo sapiens (Human).